The sequence spans 468 residues: Ribosomal protein uS12 methylthiotransferase RimO (468 aa).

An MTTase N-terminal domain is found at 18–129 (PTVAFAHLGC…IVEVLERVEA (112 aa)). Residues C27, C63, C92, C167, C171, and C174 each contribute to the [4Fe-4S] cluster site. The Radical SAM core domain occupies 153 to 382 (TTGEAVAYLK…MTLQQPISAA (230 aa)). In terms of domain architecture, TRAM spans 385 to 456 (ARWVGRTVDA…IYDLRAEIVG (72 aa)).

Belongs to the methylthiotransferase family. RimO subfamily. The cofactor is [4Fe-4S] cluster.

It localises to the cytoplasm. The catalysed reaction is L-aspartate(89)-[ribosomal protein uS12]-hydrogen + (sulfur carrier)-SH + AH2 + 2 S-adenosyl-L-methionine = 3-methylsulfanyl-L-aspartate(89)-[ribosomal protein uS12]-hydrogen + (sulfur carrier)-H + 5'-deoxyadenosine + L-methionine + A + S-adenosyl-L-homocysteine + 2 H(+). Catalyzes the methylthiolation of an aspartic acid residue of ribosomal protein uS12. The protein is Ribosomal protein uS12 methylthiotransferase RimO of Synechococcus sp. (strain WH7803).